Reading from the N-terminus, the 148-residue chain is Lipoprotein signal peptidase (148 aa).

2 consecutive transmembrane segments (helical) span residues 57–77 and 80–100; these read QWIFIIVALLATVFGLYYLNT and VHIFGRLGIILIISGALGNLI. Residues D110 and D126 contribute to the active site. The chain crosses the membrane as a helical span at residues 124–144; the sequence is IADVFVVVGTVFLCIYVLFFE.

The protein belongs to the peptidase A8 family.

The protein localises to the cell membrane. It carries out the reaction Release of signal peptides from bacterial membrane prolipoproteins. Hydrolyzes -Xaa-Yaa-Zaa-|-(S,diacylglyceryl)Cys-, in which Xaa is hydrophobic (preferably Leu), and Yaa (Ala or Ser) and Zaa (Gly or Ala) have small, neutral side chains.. It participates in protein modification; lipoprotein biosynthesis (signal peptide cleavage). Functionally, this protein specifically catalyzes the removal of signal peptides from prolipoproteins. The sequence is that of Lipoprotein signal peptidase from Clostridioides difficile (strain 630) (Peptoclostridium difficile).